Consider the following 358-residue polypeptide: Type II methyltransferase M.HpaII (358 aa).

Residues 32 to 356 (FTFIDLFAGI…KKILEKLGNL (325 aa)) form the SAM-dependent MTase C5-type domain. The active site involves cysteine 103.

This sequence belongs to the class I-like SAM-binding methyltransferase superfamily. C5-methyltransferase family. In terms of assembly, monomer.

The catalysed reaction is a 2'-deoxycytidine in DNA + S-adenosyl-L-methionine = a 5-methyl-2'-deoxycytidine in DNA + S-adenosyl-L-homocysteine + H(+). Its function is as follows. A methylase that recognizes the double-stranded sequence 5'-CCGG-3', methylates C-2 on both strands, and protects the DNA from cleavage by the HpaII endonuclease. This chain is Type II methyltransferase M.HpaII, found in Haemophilus parainfluenzae.